Here is a 147-residue protein sequence, read N- to C-terminus: MTAIRLREFIERRPVIPPSIFIAHQGRDVQGYYPGQLARLHFDHSAKRAPRPLIDLTIPPKTKYHYQPQLDQQTLIRYICLRRHSKPAEPWYKETTYRRDYSLPFYEIDWNQKLATVSLNPRPLNSLPELYCCEERSSFERNAFKLK.

The chain is Protein SPMIP3 from Homo sapiens (Human).